Here is a 162-residue protein sequence, read N- to C-terminus: Phosphopantetheine adenylyltransferase (162 aa).

A substrate-binding site is contributed by Ser-11. ATP is bound by residues 11-12 (SF) and His-19. Substrate-binding residues include Lys-43, Val-76, and Arg-90. Residues 91 to 93 (GLR), Glu-101, and 126 to 132 (LKFVSSS) each bind ATP.

It belongs to the bacterial CoaD family. In terms of assembly, homohexamer. The cofactor is Mg(2+).

The protein localises to the cytoplasm. It carries out the reaction (R)-4'-phosphopantetheine + ATP + H(+) = 3'-dephospho-CoA + diphosphate. The protein operates within cofactor biosynthesis; coenzyme A biosynthesis; CoA from (R)-pantothenate: step 4/5. Reversibly transfers an adenylyl group from ATP to 4'-phosphopantetheine, yielding dephospho-CoA (dPCoA) and pyrophosphate. The sequence is that of Phosphopantetheine adenylyltransferase from Streptococcus suis (strain 05ZYH33).